A 139-amino-acid chain; its full sequence is Nucleoside diphosphate kinase (139 aa).

Lys11, Phe59, Arg87, Thr93, Arg104, and Asn114 together coordinate ATP. His117 functions as the Pros-phosphohistidine intermediate in the catalytic mechanism.

It belongs to the NDK family. As to quaternary structure, homotetramer. Requires Mg(2+) as cofactor.

It localises to the cytoplasm. It catalyses the reaction a 2'-deoxyribonucleoside 5'-diphosphate + ATP = a 2'-deoxyribonucleoside 5'-triphosphate + ADP. It carries out the reaction a ribonucleoside 5'-diphosphate + ATP = a ribonucleoside 5'-triphosphate + ADP. Functionally, major role in the synthesis of nucleoside triphosphates other than ATP. The ATP gamma phosphate is transferred to the NDP beta phosphate via a ping-pong mechanism, using a phosphorylated active-site intermediate. The chain is Nucleoside diphosphate kinase from Wolbachia pipientis wMel.